The primary structure comprises 440 residues: MVQFFQPKPKALPTQAVEITIDNLDHHLTGVGRYQGKACFVEGVLPGEKVSVQITEQKKQYAHARLRQVIEPSADRCEPFCPAFKQCGGCNAQMMPQAMQCQAKQQGVQRLFRQLAKIDLPAPLWIESSAPQAYRRVCRLAVKYDKNKRCVLVGFRQKQSQALVEINSCPVLTAALSALIVPLRTLINELSSARDVGHIELYETESGLAMLLRHNGRPPVKDKELLLAFALQHDCALYLQTTGYPEPLADVKPSFYQLDGLRLYFQPGDFLQVNPQVNQRLVNYVREWLAPTATDNVLDLFCGIGNFTLPLAREAASVTGIEGVDEMVQRATHNAEQNQLVNTGFHRADLTKMAEYANAGWQQQCYDLVLLDPGRTGAEAVMPWLAKSGARRIVYVSCNPVTAARDCALLQPGYTLKQWGLLDMFPHTGHVESLFLFERK.

In terms of domain architecture, TRAM spans 10–68 (KALPTQAVEITIDNLDHHLTGVGRYQGKACFVEGVLPGEKVSVQITEQKKQYAHARLRQ). Positions 81, 87, 90, and 169 each coordinate [4Fe-4S] cluster. Residues Gln272, Phe301, Asn306, Glu322, Asp349, and Asp372 each contribute to the S-adenosyl-L-methionine site. Residue Cys398 is the Nucleophile of the active site.

The protein belongs to the class I-like SAM-binding methyltransferase superfamily. RNA M5U methyltransferase family. RlmD subfamily.

It carries out the reaction uridine(1939) in 23S rRNA + S-adenosyl-L-methionine = 5-methyluridine(1939) in 23S rRNA + S-adenosyl-L-homocysteine + H(+). Catalyzes the formation of 5-methyl-uridine at position 1939 (m5U1939) in 23S rRNA. This is 23S rRNA (uracil(1939)-C(5))-methyltransferase RlmD from Tolumonas auensis (strain DSM 9187 / NBRC 110442 / TA 4).